Here is a 29-residue protein sequence, read N- to C-terminus: Potassium channel toxin alpha-KTx 8.4 (29 aa).

Cystine bridges form between Cys-3/Cys-19, Cys-6/Cys-24, and Cys-10/Cys-26.

Belongs to the short scorpion toxin superfamily. Potassium channel inhibitor family. Alpha-KTx 08 subfamily. In terms of tissue distribution, expressed by the venom gland.

Its subcellular location is the secreted. Its function is as follows. Inhibits voltage-gated potassium channels. The protein is Potassium channel toxin alpha-KTx 8.4 of Leiurus hebraeus (Hebrew deathstalker scorpion).